The following is a 142-amino-acid chain: Small ribosomal subunit protein uS9 (142 aa).

The interval 117 to 142 (KGDPRRTEHKKPGIKHARSKRQKAYR) is disordered. The segment covering 123–142 (TEHKKPGIKHARSKRQKAYR) has biased composition (basic residues).

It belongs to the universal ribosomal protein uS9 family.

This is Small ribosomal subunit protein uS9 from Pyrobaculum aerophilum (strain ATCC 51768 / DSM 7523 / JCM 9630 / CIP 104966 / NBRC 100827 / IM2).